We begin with the raw amino-acid sequence, 204 residues long: Holliday junction resolvase RecU (204 aa).

The Mg(2+) site is built by threonine 89, aspartate 91, aspartate 104, and glutamine 123.

It belongs to the RecU family. Mg(2+) is required as a cofactor.

The protein resides in the cytoplasm. It carries out the reaction Endonucleolytic cleavage at a junction such as a reciprocal single-stranded crossover between two homologous DNA duplexes (Holliday junction).. Functionally, endonuclease that resolves Holliday junction intermediates in genetic recombination. Cleaves mobile four-strand junctions by introducing symmetrical nicks in paired strands. Promotes annealing of linear ssDNA with homologous dsDNA. Required for DNA repair, homologous recombination and chromosome segregation. The sequence is that of Holliday junction resolvase RecU from Leuconostoc mesenteroides subsp. mesenteroides (strain ATCC 8293 / DSM 20343 / BCRC 11652 / CCM 1803 / JCM 6124 / NCDO 523 / NBRC 100496 / NCIMB 8023 / NCTC 12954 / NRRL B-1118 / 37Y).